The sequence spans 189 residues: Sec-independent protein translocase protein TatB (189 aa).

The helical transmembrane segment at 1–21 (MFGVGIFEVLVILIVAVIALG) threads the bilayer. Residues 152-189 (TQKPQNSIDSINSKESSVDSLHSPSIVESTQSSSSKDS) form a disordered region. A compositionally biased stretch (polar residues) spans 153–189 (QKPQNSIDSINSKESSVDSLHSPSIVESTQSSSSKDS).

Belongs to the TatB family. As to quaternary structure, the Tat system comprises two distinct complexes: a TatABC complex, containing multiple copies of TatA, TatB and TatC subunits, and a separate TatA complex, containing only TatA subunits. Substrates initially bind to the TatABC complex, which probably triggers association of the separate TatA complex to form the active translocon.

The protein resides in the cell inner membrane. Its function is as follows. Part of the twin-arginine translocation (Tat) system that transports large folded proteins containing a characteristic twin-arginine motif in their signal peptide across membranes. Together with TatC, TatB is part of a receptor directly interacting with Tat signal peptides. TatB may form an oligomeric binding site that transiently accommodates folded Tat precursor proteins before their translocation. The protein is Sec-independent protein translocase protein TatB of Helicobacter hepaticus (strain ATCC 51449 / 3B1).